A 515-amino-acid chain; its full sequence is Fatty acyl-CoA reductase 1 (515 aa).

The Cytoplasmic portion of the chain corresponds to 1-465 (MVSIPEYYEG…ARKHLNKLRN (465 aa)). A necessary and sufficient for PEX19-mediated localization into peroxisome membrane region spans residues 451–507 (SGLPAARKHLNKLRNIRYGFNTILVILIWRIFIARSQMARNIWYFVVSLCYKFLSYF). The helical transmembrane segment at 466–483 (IRYGFNTILVILIWRIFI) threads the bilayer. Topologically, residues 484–515 (ARSQMARNIWYFVVSLCYKFLSYFRASSTMRY) are peroxisomal.

It belongs to the fatty acyl-CoA reductase family. In terms of assembly, interacts with PEX19; PEX19 mediates the targeting of FAR1 to peroxisomes.

Its subcellular location is the peroxisome membrane. It carries out the reaction a long-chain fatty acyl-CoA + 2 NADPH + 2 H(+) = a long-chain primary fatty alcohol + 2 NADP(+) + CoA. It catalyses the reaction hexadecanoyl-CoA + 2 NADPH + 2 H(+) = hexadecan-1-ol + 2 NADP(+) + CoA. The catalysed reaction is octadecanoyl-CoA + 2 NADPH + 2 H(+) = octadecan-1-ol + 2 NADP(+) + CoA. The enzyme catalyses (9Z)-octadecenoyl-CoA + 2 NADPH + 2 H(+) = (9Z)-octadecen-1-ol + 2 NADP(+) + CoA. It carries out the reaction (9Z,12Z)-octadecadienoyl-CoA + 2 NADPH + 2 H(+) = (9Z,12Z)-octadecadien-1-ol + 2 NADP(+) + CoA. It catalyses the reaction eicosanoyl-CoA + 2 NADPH + 2 H(+) = eicosan-1-ol + 2 NADP(+) + CoA. The catalysed reaction is 16-methylheptadecanoyl-CoA + 2 NADPH + 2 H(+) = 16-methylheptadecan-1-ol + 2 NADP(+) + CoA. The enzyme catalyses 18-methylnonadecanoyl-CoA + 2 NADPH + 2 H(+) = 18-methylnonadecan-1-ol + 2 NADP(+) + CoA. In terms of biological role, catalyzes the reduction of saturated and unsaturated C16 or C18 fatty acyl-CoA to fatty alcohols. It plays an essential role in the production of ether lipids/plasmalogens which synthesis requires fatty alcohols. In parallel, it is also required for wax monoesters production since fatty alcohols also constitute a substrate for their synthesis. Its function is as follows. Catalyzes the reduction of saturated and unsaturated C16 or C18 fatty acyl-CoA to fatty alcohols. It plays an essential role in the production of ether lipids/plasmalogens which synthesis requires fatty alcohols. In parallel, it is also required for wax monoesters production since fatty alcohols also constitute a substrate for their synthesis. This Rattus norvegicus (Rat) protein is Fatty acyl-CoA reductase 1.